A 550-amino-acid polypeptide reads, in one-letter code: Methionine--tRNA ligase (550 aa).

The 'HIGH' region motif lies at 13–23 (PYANGPLHFGH). Positions 145, 148, 158, and 161 each coordinate Zn(2+). Residues 331 to 335 (QFSKS) carry the 'KMSKS' region motif. Position 334 (Lys-334) interacts with ATP.

The protein belongs to the class-I aminoacyl-tRNA synthetase family. MetG type 1 subfamily. Monomer. Zn(2+) is required as a cofactor.

It is found in the cytoplasm. The enzyme catalyses tRNA(Met) + L-methionine + ATP = L-methionyl-tRNA(Met) + AMP + diphosphate. Is required not only for elongation of protein synthesis but also for the initiation of all mRNA translation through initiator tRNA(fMet) aminoacylation. The protein is Methionine--tRNA ligase of Chlamydia trachomatis serovar A (strain ATCC VR-571B / DSM 19440 / HAR-13).